Here is a 546-residue protein sequence, read N- to C-terminus: Chaperonin GroEL 5 (546 aa).

ATP-binding positions include 30-33 (TLGP), Lys-51, 87-91 (DGTTT), Gly-415, and Asp-495.

The protein belongs to the chaperonin (HSP60) family. As to quaternary structure, forms a cylinder of 14 subunits composed of two heptameric rings stacked back-to-back. Interacts with the co-chaperonin GroES.

The protein resides in the cytoplasm. The catalysed reaction is ATP + H2O + a folded polypeptide = ADP + phosphate + an unfolded polypeptide.. In terms of biological role, together with its co-chaperonin GroES, plays an essential role in assisting protein folding. The GroEL-GroES system forms a nano-cage that allows encapsulation of the non-native substrate proteins and provides a physical environment optimized to promote and accelerate protein folding. In Paraburkholderia xenovorans (strain LB400), this protein is Chaperonin GroEL 5.